The chain runs to 196 residues: Potassium-transporting ATPase KdpC subunit (196 aa).

A helical transmembrane segment spans residues 17 to 37; sequence LLLLVATAGLGLVYPLAVFAV. The segment at 73-93 is disordered; that stretch reads QPRPSAAGDGYDPTASGASNL.

The protein belongs to the KdpC family. In terms of assembly, the system is composed of three essential subunits: KdpA, KdpB and KdpC.

The protein localises to the cell membrane. Part of the high-affinity ATP-driven potassium transport (or Kdp) system, which catalyzes the hydrolysis of ATP coupled with the electrogenic transport of potassium into the cytoplasm. This subunit acts as a catalytic chaperone that increases the ATP-binding affinity of the ATP-hydrolyzing subunit KdpB by the formation of a transient KdpB/KdpC/ATP ternary complex. The sequence is that of Potassium-transporting ATPase KdpC subunit from Kineococcus radiotolerans (strain ATCC BAA-149 / DSM 14245 / SRS30216).